A 705-amino-acid polypeptide reads, in one-letter code: Tyrosine decarboxylase (705 aa).

The span at 22 to 32 shows a compositional bias: polar residues; sequence RIRNSLSPSRP. The tract at residues 22–81 is disordered; the sequence is RIRNSLSPSRPSMSEATATGSSSSSRASTTIPSTPNMDVTPTVEDPRQNDNNASGMTRDE. A compositionally biased stretch (low complexity) spans 33 to 55; it reads SMSEATATGSSSSSRASTTIPST. An N6-(pyridoxal phosphate)lysine modification is found at K380. Residues 554–620 adopt a coiled-coil conformation; sequence VKAVIAEEDE…AQKQHESLAK (67 aa). Residues 667-678 are compositionally biased toward polar residues; that stretch reads HSQRPNRLSQSP. Residues 667–687 are disordered; sequence HSQRPNRLSQSPGSAGSAFFD.

This sequence belongs to the group II decarboxylase family. Requires pyridoxal 5'-phosphate as cofactor. As to expression, expressed in the gonadal sheath projections in between the oocytes, in head RIM motor neurons and RIC interneurons.

It is found in the cytoplasm. The protein resides in the cell projection. Its subcellular location is the axon. It localises to the perikaryon. It carries out the reaction L-tyrosine + H(+) = tyramine + CO2. Required for the decarboxylation of tyrosine to tyramine, a precursor of octopamine but probably also itself a neurotransmitter. Involved in the regulation of egg laying, which is inhibited by tyramine. Also involved in controlling locomotion and head movements. Due to its involvement in octopamine biosynthesis, also required for crtc-1-dependent regulation of AMPK-mediated longevity which requires octopamine signaling. In Caenorhabditis elegans, this protein is Tyrosine decarboxylase.